Consider the following 84-residue polypeptide: ATP synthase subunit c (84 aa).

The next 2 helical transmembrane spans lie at 9–29 (LGLAIFGCAIGMALAALGCGI) and 57–77 (ILGLAFIESLAIYALVINLII).

This sequence belongs to the ATPase C chain family. In terms of assembly, F-type ATPases have 2 components, F(1) - the catalytic core - and F(0) - the membrane proton channel. F(1) has five subunits: alpha(3), beta(3), gamma(1), delta(1), epsilon(1). F(0) has three main subunits: a(1), b(2) and c(10-14). The alpha and beta chains form an alternating ring which encloses part of the gamma chain. F(1) is attached to F(0) by a central stalk formed by the gamma and epsilon chains, while a peripheral stalk is formed by the delta and b chains.

It is found in the cell membrane. In terms of biological role, f(1)F(0) ATP synthase produces ATP from ADP in the presence of a proton or sodium gradient. F-type ATPases consist of two structural domains, F(1) containing the extramembraneous catalytic core and F(0) containing the membrane proton channel, linked together by a central stalk and a peripheral stalk. During catalysis, ATP synthesis in the catalytic domain of F(1) is coupled via a rotary mechanism of the central stalk subunits to proton translocation. Its function is as follows. Key component of the F(0) channel; it plays a direct role in translocation across the membrane. A homomeric c-ring of between 10-14 subunits forms the central stalk rotor element with the F(1) delta and epsilon subunits. The polypeptide is ATP synthase subunit c (Lawsonia intracellularis (strain PHE/MN1-00)).